A 433-amino-acid chain; its full sequence is Serine hydroxymethyltransferase (433 aa).

Ala121 to Val123 is a (6S)-5,6,7,8-tetrahydrofolate binding site. Lys227 carries the post-translational modification N6-(pyridoxal phosphate)lysine. Residue Glu243 participates in (6S)-5,6,7,8-tetrahydrofolate binding.

Belongs to the SHMT family. Homodimer. It depends on pyridoxal 5'-phosphate as a cofactor.

It localises to the cytoplasm. It participates in amino-acid biosynthesis; glycine biosynthesis; glycine from L-serine: step 1/1. In terms of biological role, catalyzes the reversible interconversion of serine and glycine with a modified folate serving as the one-carbon carrier. Also exhibits a pteridine-independent aldolase activity toward beta-hydroxyamino acids, producing glycine and aldehydes, via a retro-aldol mechanism. The protein is Serine hydroxymethyltransferase of Saccharolobus islandicus (strain Y.G.57.14 / Yellowstone #1) (Sulfolobus islandicus).